The sequence spans 283 residues: Adenylate kinase 2, chloroplastic (283 aa).

A chloroplast-targeting transit peptide spans 1 to 59 (MTGCVNSISPPPVTLYRHRASPSRSSFSLSGDALHSLYRHRRVSRSPSIIAPKFQIVAA). Residue 74 to 79 (ASGKGT) coordinates ATP. Residues 94 to 123 (SAGDLLRAEIASGSENGRRAKEHMEKGQLV) are NMP. AMP contacts are provided by residues arginine 100, 121–123 (QLV), 150–153 (GYPR), and glutamine 157. Positions 187–220 (GRRLDPVTGKIYHLKYSPPETEEIAVRLTQRFDD) are LID. Residue arginine 188 coordinates ATP. Positions 217 and 228 each coordinate AMP.

The protein belongs to the adenylate kinase family. Monomer.

It is found in the plastid. Its subcellular location is the chloroplast stroma. The catalysed reaction is AMP + ATP = 2 ADP. Functionally, catalyzes the reversible transfer of the terminal phosphate group between ATP and AMP. Plays an important role in cellular energy homeostasis and in adenine nucleotide metabolism. Plays a major role in the equilibration of adenylates and de novo synthesis of ADP in the plastid stroma. The protein is Adenylate kinase 2, chloroplastic of Arabidopsis thaliana (Mouse-ear cress).